Reading from the N-terminus, the 357-residue chain is MPRLLIAASGTGGHIFPALSVAEELPESWDISWLGVPERLENQLVPTKYDMTVIPVGGLQSKGLRKYFQLLKLILAIFFVIYLIKRKQIKLVFTTGGYIAAPAIIASKLCGINVILHESNSYPGKVTRLLGKFCDEVALGLPIAAEKLKRCRTIVTGMPVRKSFSLKNPLPIWVPKGLEPLIVVMGGSQGAVGLNRMVRESLPWLLKQGYRVVHITGKYDKPSNINHKNFVEKSFTEEIPGLLQHADLAISRAGAGALSEFAICSLPVILVPYPYSSDHHQDANAAYAAQFGAALIVHEDRLGTHVLTRALENLLATNRMSSKYKSDDLLNKMRIGMTKLAIKDANQRLISILQRYV.

Residues 11-13, Asn-120, Arg-161, Ser-188, and Gln-281 contribute to the UDP-N-acetyl-alpha-D-glucosamine site; that span reads TGG.

It belongs to the glycosyltransferase 28 family. MurG subfamily.

The protein localises to the cell inner membrane. The enzyme catalyses di-trans,octa-cis-undecaprenyl diphospho-N-acetyl-alpha-D-muramoyl-L-alanyl-D-glutamyl-meso-2,6-diaminopimeloyl-D-alanyl-D-alanine + UDP-N-acetyl-alpha-D-glucosamine = di-trans,octa-cis-undecaprenyl diphospho-[N-acetyl-alpha-D-glucosaminyl-(1-&gt;4)]-N-acetyl-alpha-D-muramoyl-L-alanyl-D-glutamyl-meso-2,6-diaminopimeloyl-D-alanyl-D-alanine + UDP + H(+). It participates in cell wall biogenesis; peptidoglycan biosynthesis. Its function is as follows. Cell wall formation. Catalyzes the transfer of a GlcNAc subunit on undecaprenyl-pyrophosphoryl-MurNAc-pentapeptide (lipid intermediate I) to form undecaprenyl-pyrophosphoryl-MurNAc-(pentapeptide)GlcNAc (lipid intermediate II). The protein is UDP-N-acetylglucosamine--N-acetylmuramyl-(pentapeptide) pyrophosphoryl-undecaprenol N-acetylglucosamine transferase of Prochlorococcus marinus (strain SARG / CCMP1375 / SS120).